Reading from the N-terminus, the 85-residue chain is Large ribosomal subunit protein bL27 (85 aa).

A compositionally biased stretch (polar residues) spans 1 to 13 (MAKTKSGGSTSNG). Positions 1-26 (MAKTKSGGSTSNGRDSKGRRLGQKLG) are disordered.

This sequence belongs to the bacterial ribosomal protein bL27 family.

The sequence is that of Large ribosomal subunit protein bL27 from Mycoplasma mobile (strain ATCC 43663 / 163K / NCTC 11711) (Mesomycoplasma mobile).